A 379-amino-acid chain; its full sequence is Cytochrome b (379 aa).

4 consecutive transmembrane segments (helical) span residues 33-53 (FGSLLGICLAVQILTGLFLAM), 77-98 (WILRYLHANGASMFFICLYIHV), 113-133 (WNIGVILLFAVMATAFMGYVL), and 178-198 (FFAFHFLLPFIISAMVMVHLL). His83 and His97 together coordinate heme b. Heme b is bound by residues His182 and His196. His201 serves as a coordination point for a ubiquinone. 4 consecutive transmembrane segments (helical) span residues 226–246 (IKDILGLLLMIMVLLMLVLFS), 288–308 (LGGVMALVLSILILIIIPVLH), 320–340 (LSQCLFWLLVADLLXVTWIGG), and 347–367 (YVIXGQLASIXXXXIXIXXXX).

Belongs to the cytochrome b family. As to quaternary structure, the cytochrome bc1 complex contains 11 subunits: 3 respiratory subunits (MT-CYB, CYC1 and UQCRFS1), 2 core proteins (UQCRC1 and UQCRC2) and 6 low-molecular weight proteins (UQCRH/QCR6, UQCRB/QCR7, UQCRQ/QCR8, UQCR10/QCR9, UQCR11/QCR10 and a cleavage product of UQCRFS1). This cytochrome bc1 complex then forms a dimer. Heme b is required as a cofactor.

It is found in the mitochondrion inner membrane. In terms of biological role, component of the ubiquinol-cytochrome c reductase complex (complex III or cytochrome b-c1 complex) that is part of the mitochondrial respiratory chain. The b-c1 complex mediates electron transfer from ubiquinol to cytochrome c. Contributes to the generation of a proton gradient across the mitochondrial membrane that is then used for ATP synthesis. In Myotis goudotii (Malagasy mouse-eared bat), this protein is Cytochrome b (MT-CYB).